The sequence spans 359 residues: C-X-C chemokine receptor type 2 (359 aa).

Residues methionine 1–serine 47 lie on the Extracellular side of the membrane. Asparagine 23 carries N-linked (GlcNAc...) asparagine glycosylation. The helical transmembrane segment at tyrosine 48–tyrosine 74 threads the bilayer. Residues asparagine 75–aspartate 83 lie on the Cytoplasmic side of the membrane. A helical membrane pass occupies residues valine 84 to alanine 104. Over alanine 105–lysine 119 the chain is Extracellular. Cysteine 118 and cysteine 195 are oxidised to a cystine. The chain crosses the membrane as a helical span at residues isoleucine 120–methionine 141. Residues aspartate 142–lysine 162 lie on the Cytoplasmic side of the membrane. A helical transmembrane segment spans residues phenylalanine 163–leucine 182. Over arginine 183–arginine 207 the chain is Extracellular. Residues valine 208–tyrosine 230 form a helical membrane-spanning segment. At glycine 231–arginine 250 the chain is on the cytoplasmic side. The chain crosses the membrane as a helical span at residues valine 251–threonine 272. The Extracellular portion of the chain corresponds to aspartate 273 to lysine 293. Residues alanine 294–alanine 314 traverse the membrane as a helical segment. The Cytoplasmic portion of the chain corresponds to phenylalanine 315 to leucine 359.

It belongs to the G-protein coupled receptor 1 family. Interacts with IL8. Interacts with GNAI2. Post-translationally, phosphorylated upon ligand binding; which is required for desensitization.

It localises to the cell membrane. Receptor for interleukin-8 which is a powerful neutrophil chemotactic factor. Binding of IL-8 to the receptor causes activation of neutrophils. This response is mediated via a G-protein that activates a phosphatidylinositol-calcium second messenger system. Binds to IL-8 with high affinity. Also binds with high affinity to CXCL3, GRO/MGSA and NAP-2. The chain is C-X-C chemokine receptor type 2 (Cxcr2) from Mus musculus (Mouse).